The primary structure comprises 510 residues: Protein HGV2 (510 aa).

Positions glycine 95–aspartate 227 are disordered. A compositionally biased stretch (acidic residues) spans glutamate 98–glutamate 110. Basic and acidic residues-rich tracts occupy residues glutamine 111–valine 129 and glutamate 142–valine 199. The span at threonine 204–serine 217 shows a compositional bias: low complexity. TPR repeat units follow at residues alanine 260–leucine 293 and alanine 302–arginine 335. Positions aspartate 391–arginine 510 are disordered. Positions alanine 398–threonine 411 are enriched in low complexity. 2 consecutive short sequence motifs (nuclear localization signal) follow at residues valine 444–proline 451 and serine 465–glutamate 471. The span at glutamate 459–glutamate 471 shows a compositional bias: basic and acidic residues.

This sequence belongs to the NASP family. As to expression, embryo and larvae.

It localises to the nucleus. In terms of biological role, may function as a nucleosome assembly factor during rapid embryonic cell divisions. This Halocynthia roretzi (Sea squirt) protein is Protein HGV2 (HGV2).